The chain runs to 267 residues: Ribosomal RNA small subunit methyltransferase A (267 aa).

The S-adenosyl-L-methionine site is built by N18, L20, G45, E66, D91, and N112.

Belongs to the class I-like SAM-binding methyltransferase superfamily. rRNA adenine N(6)-methyltransferase family. RsmA subfamily.

The protein localises to the cytoplasm. The enzyme catalyses adenosine(1518)/adenosine(1519) in 16S rRNA + 4 S-adenosyl-L-methionine = N(6)-dimethyladenosine(1518)/N(6)-dimethyladenosine(1519) in 16S rRNA + 4 S-adenosyl-L-homocysteine + 4 H(+). Its function is as follows. Specifically dimethylates two adjacent adenosines (A1518 and A1519) in the loop of a conserved hairpin near the 3'-end of 16S rRNA in the 30S particle. May play a critical role in biogenesis of 30S subunits. The polypeptide is Ribosomal RNA small subunit methyltransferase A (Shewanella pealeana (strain ATCC 700345 / ANG-SQ1)).